Consider the following 267-residue polypeptide: uncharacterized protein (267 aa).

Positions 1-55 are disordered; that stretch reads MTEERKETFEEEINQSERIDADEEPLSRMSRKASRQSKQKQKQKQKPRQERGEST. Residues 9-24 show a composition bias toward acidic residues; sequence FEEEINQSERIDADEE. Positions 29–46 are enriched in basic residues; sequence MSRKASRQSKQKQKQKQK. Transmembrane regions (helical) follow at residues 93-115, 135-157, 173-195, 199-221, and 234-256; these read YKYG…WFQL, GFLV…IWAV, AVLG…FAIV, MLTV…LYVQ, and YIYC…WPFI.

It is found in the cell membrane. This is an uncharacterized protein from Bacillus subtilis (strain 168).